The sequence spans 338 residues: Ketol-acid reductoisomerase (NADP(+)) (338 aa).

Residues 1–181 (MQVYYDKDCD…GGGRTGIIET (181 aa)) enclose the KARI N-terminal Rossmann domain. NADP(+) contacts are provided by residues 24 to 27 (FGSQ), R47, S50, S52, and 82 to 85 (DEFQ). H107 is an active-site residue. G133 serves as a coordination point for NADP(+). The region spanning 182–327 (TFKDETETDL…EKLRSMMPWI (146 aa)) is the KARI C-terminal knotted domain. Mg(2+) contacts are provided by D190, E194, E226, and E230. S251 serves as a coordination point for substrate.

Belongs to the ketol-acid reductoisomerase family. It depends on Mg(2+) as a cofactor.

It carries out the reaction (2R)-2,3-dihydroxy-3-methylbutanoate + NADP(+) = (2S)-2-acetolactate + NADPH + H(+). The catalysed reaction is (2R,3R)-2,3-dihydroxy-3-methylpentanoate + NADP(+) = (S)-2-ethyl-2-hydroxy-3-oxobutanoate + NADPH + H(+). The protein operates within amino-acid biosynthesis; L-isoleucine biosynthesis; L-isoleucine from 2-oxobutanoate: step 2/4. Its pathway is amino-acid biosynthesis; L-valine biosynthesis; L-valine from pyruvate: step 2/4. Functionally, involved in the biosynthesis of branched-chain amino acids (BCAA). Catalyzes an alkyl-migration followed by a ketol-acid reduction of (S)-2-acetolactate (S2AL) to yield (R)-2,3-dihydroxy-isovalerate. In the isomerase reaction, S2AL is rearranged via a Mg-dependent methyl migration to produce 3-hydroxy-3-methyl-2-ketobutyrate (HMKB). In the reductase reaction, this 2-ketoacid undergoes a metal-dependent reduction by NADPH to yield (R)-2,3-dihydroxy-isovalerate. This Marinobacter nauticus (strain ATCC 700491 / DSM 11845 / VT8) (Marinobacter aquaeolei) protein is Ketol-acid reductoisomerase (NADP(+)).